The primary structure comprises 765 residues: Complement factor B (765 aa).

An N-terminal signal peptide occupies residues 1-25 (MGSNRCPRLGLVPLILGLLSGGVSM). Sushi domains are found at residues 35-100 (SPCS…ECKA), 101-160 (IRCP…ICDD), and 163-220 (GYCP…SCQD). 6 disulfides stabilise this stretch: Cys37-Cys76, Cys62-Cys98, Cys103-Cys145, Cys131-Cys158, Cys165-Cys205, and Cys191-Cys218. 2 N-linked (GlcNAc...) asparagine glycosylation sites follow: Asn122 and Asn142. The VWFA domain occupies 270–469 (NIYLVLDGSD…NLEDVFFQML (200 aa)). Mg(2+) contacts are provided by Ser278 and Ser280. Residue Asn285 is glycosylated (N-linked (GlcNAc...) asparagine). Residue Thr353 coordinates Mg(2+). N-linked (GlcNAc...) asparagine glycosylation is present at Asn378. One can recognise a Peptidase S1 domain in the interval 477–758 (LCGMVWEHKD…VLPWLKEKLK (282 aa)). Intrachain disulfides connect Cys478-Cys596, Cys511-Cys527, Cys599-Cys615, Cys660-Cys686, and Cys699-Cys729. Catalysis depends on charge relay system residues His526 and Asp576. The active-site Charge relay system is Ser703.

It belongs to the peptidase S1 family. Monomer. Interacts with complement C3b; this interaction is dependent on the presence of Mg(2+). In terms of assembly, catalytic component of the C3 convertase of the alternative complement pathway, also named C3bBb, composed of complement factor B Bb and complement C3b. Catalytic component of the C5 convertase of the alternative complement pathway, also named C3bBb3b, composed of complement factor B Bb and additional molecules of complement C3b. Interacts to CFP; this interaction contributes to the stabilization of the active C3-convertase enzyme complex. Mg(2+) serves as cofactor. It depends on Mn(2+) as a cofactor. Post-translationally, cleaved by CFD following activation of the alternative complement system, generating Ba and Bb chains. Cleavage and activation takes place when CFB is already associated with complement C3b.

The protein resides in the secreted. It localises to the cell surface. It catalyses the reaction Cleavage of Arg-|-Ser bond in complement component C3 alpha-chain to yield C3a and C3b, and Arg-|-Xaa bond in complement component C5 alpha-chain to yield C5a and C5b.. Its function is as follows. Precursor of the catalytic component of the C3 and C5 convertase complexes of the alternative pathway of the complement system, a cascade of proteins that leads to phagocytosis and breakdown of pathogens and signaling that strengthens the adaptive immune system. The alternative complement pathway acts as an amplification loop that enhances other complement pathways (classical, lectin and GZMK) by promoting formation of additional C3 and C5 convertases. CFB is cleaved and activated by CFD to generate Ba and Bb chains; Bb chain constituting the catalytic component of the C3 and C5 convertases. In terms of biological role, serine protease component of the complement C3 and C5 convertase complexes of the alternative complement pathway. Following cleavage and activation by factor D (CFD), forms the C3 convertase together with complement C3b. As part of the C3 convertase, cleaves and activates C3 into C3a anaphylatoxin and C3b opsonin, the next components of the complement pathways. When an additional complement C3b molecule binds to the C3 convertase, forms the C5 convertase, which cleaves and activates C5 into C5a anaphylatoxin and C5b component of the membrane attack complex. Involved in proliferation and differentiation of preactivated B-lymphocytes, rapid spreading of peripheral blood monocytes, stimulation of lymphocyte blastogenesis and lysis of erythrocytes. The polypeptide is Complement factor B (CFB) (Sus scrofa (Pig)).